The primary structure comprises 439 residues: (p)ppApp synthetase toxin Tas1 (439 aa).

The protein resides in the secreted. The enzyme catalyses AMP + ATP = adenosine 3'-diphosphate,5'-phosphate + AMP + H(+). It catalyses the reaction ADP + ATP = adenosine 3'-diphosphate,5'-diphosphate + AMP. The catalysed reaction is 2 ATP = adenosine 3'-diphosphate,5'-triphosphate + AMP. Functionally, type VI secretion exported toxin that pyrophosphorylates adenosine nucleotides to produce (p)ppApp. Thereby, depletes cellular ADP and ATP to dysregulate central metabolism in competitor cells. The polypeptide is (p)ppApp synthetase toxin Tas1 (tas1) (Pseudomonas aeruginosa (strain UCBPP-PA14)).